A 138-amino-acid polypeptide reads, in one-letter code: Large ribosomal subunit protein uL16c (138 aa).

Belongs to the universal ribosomal protein uL16 family. As to quaternary structure, part of the 50S ribosomal subunit.

The protein resides in the plastid. The protein localises to the chloroplast. This is Large ribosomal subunit protein uL16c from Chaetosphaeridium globosum (Charophycean green alga).